Consider the following 25-residue polypeptide: U11-ctenitoxin-Co1b (25 aa).

Disulfide bonds link C4–C18 and C11–C22.

Monomer. In terms of tissue distribution, expressed by the venom gland.

It localises to the secreted. Neurotoxin. This chain is U11-ctenitoxin-Co1b, found in Ctenus ornatus (Brazilian spider).